A 204-amino-acid polypeptide reads, in one-letter code: Urease accessory protein UreG (204 aa).

Gly-11–Thr-18 is a binding site for GTP.

Belongs to the SIMIBI class G3E GTPase family. UreG subfamily. As to quaternary structure, homodimer. UreD, UreF and UreG form a complex that acts as a GTP-hydrolysis-dependent molecular chaperone, activating the urease apoprotein by helping to assemble the nickel containing metallocenter of UreC. The UreE protein probably delivers the nickel.

The protein resides in the cytoplasm. In terms of biological role, facilitates the functional incorporation of the urease nickel metallocenter. This process requires GTP hydrolysis, probably effectuated by UreG. The chain is Urease accessory protein UreG from Staphylococcus aureus (strain bovine RF122 / ET3-1).